The sequence spans 176 residues: Probable DNA-directed RNA polymerase subunit delta (176 aa).

One can recognise an HTH HARE-type domain in the interval 14 to 81 (CSMIEVVHSV…GENRWGLRSW (68 aa)). Residues 90–176 (EILPQPKPKK…ETEEEEEEEL (87 aa)) form a disordered region. A compositionally biased stretch (acidic residues) spans 106-176 (DGFDDYIEED…ETEEEEEEEL (71 aa)).

This sequence belongs to the RpoE family. As to quaternary structure, RNAP is composed of a core of 2 alpha, a beta and a beta' subunits. The core is associated with a delta subunit and one of several sigma factors.

Functionally, participates in both the initiation and recycling phases of transcription. In the presence of the delta subunit, RNAP displays an increased specificity of transcription, a decreased affinity for nucleic acids, and an increased efficiency of RNA synthesis because of enhanced recycling. The protein is Probable DNA-directed RNA polymerase subunit delta of Bacillus thuringiensis subsp. konkukian (strain 97-27).